The chain runs to 671 residues: Phospholipid:diacylglycerol acyltransferase 1 (671 aa).

Residues 1–46 (MPLIHRKKPTEKPSTPPSEEVVHDEDSQKKPHESSKSHHKKSNGGG) are disordered. The Cytoplasmic segment spans residues 1 to 54 (MPLIHRKKPTEKPSTPPSEEVVHDEDSQKKPHESSKSHHKKSNGGGKWSCIDSC). Residues 20–36 (EVVHDEDSQKKPHESSK) are compositionally biased toward basic and acidic residues. Residues 55-75 (CWFIGCVCVTWWFLLFLYNAM) form a helical membrane-spanning segment. Residues 76–671 (PASFPQYVTE…EWSERIDLKL (596 aa)) lie on the Lumenal side of the membrane. A glycan (N-linked (GlcNAc...) asparagine) is linked at N161. The active-site Acyl-ester intermediate is S254. N381 and N434 each carry an N-linked (GlcNAc...) asparagine glycan. Active-site charge relay system residues include D573 and H626. An N-linked (GlcNAc...) asparagine glycan is attached at N647.

It belongs to the AB hydrolase superfamily. Lipase family. In terms of tissue distribution, ubiquitous. Highest expression in young developing seeds.

The protein resides in the membrane. It carries out the reaction a glycerophospholipid + a 1,2-diacyl-sn-glycerol = a monoacylglycerophospholipid + a triacyl-sn-glycerol. The protein operates within glycerolipid metabolism; triacylglycerol biosynthesis. Functionally, triacylglycerol formation by an acyl-CoA independent pathway. The enzyme preferentially transfers acyl groups from the sn-2 position of a phospholipid to diacylglycerol, thus forming an sn-1-lysophospholipid. Involved in epoxy and hydroxy fatty acid accumulation in seeds. Has complementary functions with DAG1 that are essential for triacylglycerol synthesis and normal development of both seeds and pollen. The protein is Phospholipid:diacylglycerol acyltransferase 1 (PDAT1) of Arabidopsis thaliana (Mouse-ear cress).